We begin with the raw amino-acid sequence, 201 residues long: Orotate phosphoribosyltransferase (201 aa).

Glu113 to Ser121 serves as a coordination point for 5-phospho-alpha-D-ribose 1-diphosphate. Orotate-binding residues include Thr117 and Arg145.

Belongs to the purine/pyrimidine phosphoribosyltransferase family. PyrE subfamily. As to quaternary structure, homodimer. Mg(2+) is required as a cofactor.

It carries out the reaction orotidine 5'-phosphate + diphosphate = orotate + 5-phospho-alpha-D-ribose 1-diphosphate. It functions in the pathway pyrimidine metabolism; UMP biosynthesis via de novo pathway; UMP from orotate: step 1/2. Functionally, catalyzes the transfer of a ribosyl phosphate group from 5-phosphoribose 1-diphosphate to orotate, leading to the formation of orotidine monophosphate (OMP). The polypeptide is Orotate phosphoribosyltransferase (Helicobacter pylori (strain ATCC 700392 / 26695) (Campylobacter pylori)).